A 493-amino-acid chain; its full sequence is Cytochrome c-552 (493 aa).

The N-terminal stretch at 1-25 (MEKKLKSWQGWLLFCGAMAVVFVLG) is a signal peptide. Residue H116 coordinates heme c. Heme contacts are provided by C144, C147, and K148. C182, C185, H186, C224, C227, and H228 together coordinate heme c. Ca(2+) is bound by residues E230, Y231, K276, and Q278. A substrate-binding site is contributed by Y231. A substrate-binding site is contributed by H279. Positions 290, 297, 300, 301, 315, 328, 331, 332, and 407 each coordinate heme c.

The protein belongs to the cytochrome c-552 family. Ca(2+) serves as cofactor. It depends on heme c as a cofactor.

It localises to the periplasm. It carries out the reaction 6 Fe(III)-[cytochrome c] + NH4(+) + 2 H2O = 6 Fe(II)-[cytochrome c] + nitrite + 8 H(+). Its pathway is nitrogen metabolism; nitrate reduction (assimilation). In terms of biological role, catalyzes the reduction of nitrite to ammonia, consuming six electrons in the process. The polypeptide is Cytochrome c-552 (Bacteroides fragilis (strain YCH46)).